The primary structure comprises 132 residues: Fluoride-specific ion channel FluC 2 (132 aa).

Helical transmembrane passes span Leu12 to Leu32, Leu41 to Pro61, Leu65 to Ala85, and Ala96 to Phe116. The Na(+) site is built by Gly73 and Thr76.

The protein belongs to the fluoride channel Fluc/FEX (TC 1.A.43) family.

It is found in the cell inner membrane. It catalyses the reaction fluoride(in) = fluoride(out). Its activity is regulated as follows. Na(+) is not transported, but it plays an essential structural role and its presence is essential for fluoride channel function. Functionally, fluoride-specific ion channel. Important for reducing fluoride concentration in the cell, thus reducing its toxicity. The protein is Fluoride-specific ion channel FluC 2 of Parasynechococcus marenigrum (strain WH8102).